A 290-amino-acid polypeptide reads, in one-letter code: Protoheme IX farnesyltransferase 1 (290 aa).

8 helical membrane-spanning segments follow: residues 8-28, 36-56, 85-105, 108-128, 131-151, 152-172, 211-231, and 269-289; these read ITKPGIIFGNLISVAAGFFLA, FLLLLTTLVGVGLVIASGCVV, AAFVYALVLLLNGTALLFQVV, LSAVVVLLGYVFYVFFYTMWY, NSVYGTLVGSISGAVPPLVGY, LAVTNYISLEATLLFVMFCLW, AYVVAFGVVAIGLFMLGEAGY, and LLVVMGISGVLGLELIPLPFI.

This sequence belongs to the UbiA prenyltransferase family. Protoheme IX farnesyltransferase subfamily.

It localises to the cell inner membrane. The enzyme catalyses heme b + (2E,6E)-farnesyl diphosphate + H2O = Fe(II)-heme o + diphosphate. The protein operates within porphyrin-containing compound metabolism; heme O biosynthesis; heme O from protoheme: step 1/1. Functionally, converts heme B (protoheme IX) to heme O by substitution of the vinyl group on carbon 2 of heme B porphyrin ring with a hydroxyethyl farnesyl side group. The chain is Protoheme IX farnesyltransferase 1 from Vibrio campbellii (strain ATCC BAA-1116).